The following is a 104-amino-acid chain: Large ribosomal subunit protein uL24 (104 aa).

It belongs to the universal ribosomal protein uL24 family. Part of the 50S ribosomal subunit.

Its function is as follows. One of two assembly initiator proteins, it binds directly to the 5'-end of the 23S rRNA, where it nucleates assembly of the 50S subunit. Functionally, one of the proteins that surrounds the polypeptide exit tunnel on the outside of the subunit. The protein is Large ribosomal subunit protein uL24 of Pseudomonas syringae pv. syringae (strain B728a).